Here is a 374-residue protein sequence, read N- to C-terminus: F-box/LRR-repeat protein 8 (374 aa).

The F-box domain maps to 2–48 (AEPGEGLPEEVLALIFRHLSLRDRAAAARVCRAWAAAATCSAVWHDT).

Directly interacts with SKP1 and CUL1.

Substrate-recognition component of the SCF (SKP1-CUL1-F-box protein)-type E3 ubiquitin ligase complex. This Homo sapiens (Human) protein is F-box/LRR-repeat protein 8 (FBXL8).